The following is a 230-amino-acid chain: Large ribosomal subunit protein uL1 (230 aa).

It belongs to the universal ribosomal protein uL1 family. Part of the 50S ribosomal subunit.

Binds directly to 23S rRNA. The L1 stalk is quite mobile in the ribosome, and is involved in E site tRNA release. Functionally, protein L1 is also a translational repressor protein, it controls the translation of the L11 operon by binding to its mRNA. This is Large ribosomal subunit protein uL1 from Nitrosospira multiformis (strain ATCC 25196 / NCIMB 11849 / C 71).